Consider the following 156-residue polypeptide: Small ribosomal subunit protein uS7c (156 aa).

It belongs to the universal ribosomal protein uS7 family. As to quaternary structure, part of the 30S ribosomal subunit.

Its subcellular location is the plastid. It localises to the chloroplast. One of the primary rRNA binding proteins, it binds directly to 16S rRNA where it nucleates assembly of the head domain of the 30S subunit. The chain is Small ribosomal subunit protein uS7c (rps7) from Pisum sativum (Garden pea).